We begin with the raw amino-acid sequence, 278 residues long: Prohibitin-7, mitochondrial (278 aa).

Residues 1 to 14 (MNVKKVPNVPGSPA) lie on the Mitochondrial matrix side of the membrane. A helical; Signal-anchor for type II membrane protein membrane pass occupies residues 15 to 37 (LSALLKLGVIGGLGLYCIGSSMY). Residues 38-278 (NVDGGHRAIV…NSSDLLISKQ (241 aa)) are Mitochondrial intermembrane-facing. Positions 186–220 (KEFTEAIEKKQVAAQEAERAKFIVEKAEQDKKSAI) form a coiled coil.

This sequence belongs to the prohibitin family. In terms of assembly, component of a prohibitin multimeric complex in mitochondrial membranes.

It localises to the mitochondrion inner membrane. Its function is as follows. Prohibitin probably acts as a holdase/unfoldase for the stabilization of newly synthesized mitochondrial proteins. The polypeptide is Prohibitin-7, mitochondrial (PHB7) (Arabidopsis thaliana (Mouse-ear cress)).